The chain runs to 941 residues: Bifunctional glutamine synthetase adenylyltransferase/adenylyl-removing enzyme (941 aa).

The adenylyl removase stretch occupies residues 1–431 (MSSAPPFAAA…TFRNAFRLAG (431 aa)). Positions 447–941 (NGHAMRPHAG…DGTIAQAEVK (495 aa)) are adenylyl transferase.

It belongs to the GlnE family. Requires Mg(2+) as cofactor.

It catalyses the reaction [glutamine synthetase]-O(4)-(5'-adenylyl)-L-tyrosine + phosphate = [glutamine synthetase]-L-tyrosine + ADP. It carries out the reaction [glutamine synthetase]-L-tyrosine + ATP = [glutamine synthetase]-O(4)-(5'-adenylyl)-L-tyrosine + diphosphate. Involved in the regulation of glutamine synthetase GlnA, a key enzyme in the process to assimilate ammonia. When cellular nitrogen levels are high, the C-terminal adenylyl transferase (AT) inactivates GlnA by covalent transfer of an adenylyl group from ATP to specific tyrosine residue of GlnA, thus reducing its activity. Conversely, when nitrogen levels are low, the N-terminal adenylyl removase (AR) activates GlnA by removing the adenylyl group by phosphorolysis, increasing its activity. The regulatory region of GlnE binds the signal transduction protein PII (GlnB) which indicates the nitrogen status of the cell. This is Bifunctional glutamine synthetase adenylyltransferase/adenylyl-removing enzyme from Bordetella pertussis (strain Tohama I / ATCC BAA-589 / NCTC 13251).